The chain runs to 313 residues: DNA-directed RNA polymerase subunit alpha (313 aa).

Positions methionine 1–asparagine 226 are alpha N-terminal domain (alpha-NTD). Positions lysine 243–glutamate 313 are alpha C-terminal domain (alpha-CTD).

This sequence belongs to the RNA polymerase alpha chain family. Homodimer. The RNAP catalytic core consists of 2 alpha, 1 beta, 1 beta' and 1 omega subunit. When a sigma factor is associated with the core the holoenzyme is formed, which can initiate transcription.

It carries out the reaction RNA(n) + a ribonucleoside 5'-triphosphate = RNA(n+1) + diphosphate. DNA-dependent RNA polymerase catalyzes the transcription of DNA into RNA using the four ribonucleoside triphosphates as substrates. The chain is DNA-directed RNA polymerase subunit alpha from Carboxydothermus hydrogenoformans (strain ATCC BAA-161 / DSM 6008 / Z-2901).